The sequence spans 528 residues: (R)-citramalate synthase (528 aa).

Positions 4–266 (VKLYDTTLRD…RECIGDDQLR (263 aa)) constitute a Pyruvate carboxyltransferase domain.

It belongs to the alpha-IPM synthase/homocitrate synthase family.

The enzyme catalyses pyruvate + acetyl-CoA + H2O = (3R)-citramalate + CoA + H(+). Its pathway is amino-acid biosynthesis; L-isoleucine biosynthesis; 2-oxobutanoate from pyruvate: step 1/3. Its function is as follows. Catalyzes the condensation of pyruvate and acetyl-coenzyme A to form (R)-citramalate. Makes part of the main pathway for isoleucine biosynthesis in G.sulfurreducens, i.e. the citramalate-dependent pathway. The polypeptide is (R)-citramalate synthase (Geobacter sulfurreducens (strain ATCC 51573 / DSM 12127 / PCA)).